The sequence spans 638 residues: Chaperone protein DnaK (638 aa).

At T198 the chain carries Phosphothreonine; by autocatalysis. A disordered region spans residues 599–638; the sequence is IYESQQAEGGAEGGPSGHHDDGIVDADYEEVKDDNTKKSA. Acidic residues predominate over residues 621-630; that stretch reads IVDADYEEVK.

This sequence belongs to the heat shock protein 70 family.

In terms of biological role, acts as a chaperone. This is Chaperone protein DnaK from Allorhizobium ampelinum (strain ATCC BAA-846 / DSM 112012 / S4) (Agrobacterium vitis (strain S4)).